Consider the following 78-residue polypeptide: Putative membrane protein insertion efficiency factor (78 aa).

Belongs to the UPF0161 family.

The protein localises to the cell inner membrane. In terms of biological role, could be involved in insertion of integral membrane proteins into the membrane. This is Putative membrane protein insertion efficiency factor from Thiobacillus denitrificans (strain ATCC 25259 / T1).